The primary structure comprises 168 residues: G/U mismatch-specific DNA glycosylase (168 aa).

Belongs to the uracil-DNA glycosylase (UDG) superfamily. TDG/mug family. In terms of assembly, binds DNA as a monomer.

The protein resides in the cytoplasm. The catalysed reaction is Specifically hydrolyzes mismatched double-stranded DNA and polynucleotides, releasing free uracil.. Functionally, excises ethenocytosine and uracil, which can arise by alkylation or deamination of cytosine, respectively, from the corresponding mispairs with guanine in ds-DNA. It is capable of hydrolyzing the carbon-nitrogen bond between the sugar-phosphate backbone of the DNA and the mispaired base. The complementary strand guanine functions in substrate recognition. Required for DNA damage lesion repair in stationary-phase cells. In Salmonella dublin (strain CT_02021853), this protein is G/U mismatch-specific DNA glycosylase.